We begin with the raw amino-acid sequence, 424 residues long: Calreticulin-2 (424 aa).

The signal sequence occupies residues 1–22 (MAKMIPSLVSLILIGLVAIASA). Asn-59 is a glycosylation site (N-linked (GlcNAc...) asparagine). A disulfide bridge links Cys-108 with Cys-140. Positions 112, 114, 131, and 138 each coordinate an alpha-D-glucoside. Repeat copies occupy residues 194–205 (KQTGSLYSDWDL), 213–224 (DPSAKKPEDWDE), 230–241 (DPEDKKPDGYDD), 248–259 (DTDSKKPEDWDD), 263–273 (GEWTAPTIPNP), 277–287 (GEWKPKQIKNP), and 291–301 (GKWEAPLIDNP). A 4 X approximate repeats region spans residues 194-259 (KQTGSLYSDW…DSKKPEDWDD (66 aa)). A compositionally biased stretch (basic and acidic residues) spans 210–220 (KIKDPSAKKPE). The disordered stretch occupies residues 210–279 (KIKDPSAKKP…IPNPEYMGEW (70 aa)). Acidic residues predominate over residues 221-230 (DWDEQEYISD). Basic and acidic residues predominate over residues 231–255 (PEDKKPDGYDDIPKEIPDTDSKKPE). A 3 X approximate repeats region spans residues 263–301 (GEWTAPTIPNPEYMGEWKPKQIKNPNYKGKWEAPLIDNP). Position 321 (Glu-321) interacts with an alpha-D-glucoside. Positions 362-378 (FDEAEKKNEEEESKDAP) are enriched in basic and acidic residues. Positions 362–424 (FDEAEKKNEE…EKDATAHDEL (63 aa)) are disordered. The segment covering 379-397 (AESDAEDEPEDDEGGDDSD) has biased composition (acidic residues). A phosphoserine mark is found at Ser-381 and Ser-396. Over residues 398–424 (SESKAEETKSVDSEETSEKDATAHDEL) the composition is skewed to basic and acidic residues. The Prevents secretion from ER motif lies at 421–424 (HDEL).

It belongs to the calreticulin family.

The protein resides in the endoplasmic reticulum lumen. In terms of biological role, molecular calcium-binding chaperone promoting folding, oligomeric assembly and quality control in the ER via the calreticulin/calnexin cycle. This lectin may interact transiently with almost all of the monoglucosylated glycoproteins that are synthesized in the ER. This Arabidopsis thaliana (Mouse-ear cress) protein is Calreticulin-2 (CRT2).